The primary structure comprises 118 residues: Holo-[acyl-carrier-protein] synthase (118 aa).

2 residues coordinate Mg(2+): aspartate 8 and glutamate 58.

This sequence belongs to the P-Pant transferase superfamily. AcpS family. Requires Mg(2+) as cofactor.

Its subcellular location is the cytoplasm. The enzyme catalyses apo-[ACP] + CoA = holo-[ACP] + adenosine 3',5'-bisphosphate + H(+). In terms of biological role, transfers the 4'-phosphopantetheine moiety from coenzyme A to a Ser of acyl-carrier-protein. The chain is Holo-[acyl-carrier-protein] synthase from Listeria monocytogenes serotype 4a (strain HCC23).